The chain runs to 180 residues: MKTIEVDDELYAYIASHTRHIGESASDILRRMLKFSAASQPATPVSKEVRASNVVAEAKTVAPVKDKVRAVRELLLSDEYAEQKKAVNRFLLVLTTLYSLDNKAFAEATESLHGRTRVYFAADEQTLIQNGNQTKPKQVPGTPYWVITNTNTGRKRSMVEHIMQSMQFPAELIEKVCGTI.

Interaction with DNA regions lie at residues 86–87 (AV), 115–119 (RTRVY), and 149–155 (NTNTGRK).

This sequence belongs to the SeqA family. Homodimer. Polymerizes to form helical filaments.

It localises to the cytoplasm. Negative regulator of replication initiation, which contributes to regulation of DNA replication and ensures that replication initiation occurs exactly once per chromosome per cell cycle. Binds to pairs of hemimethylated GATC sequences in the oriC region, thus preventing assembly of replication proteins and re-initiation at newly replicated origins. Repression is relieved when the region becomes fully methylated. This Enterobacter sp. (strain 638) protein is Negative modulator of initiation of replication.